The following is a 564-amino-acid chain: Dihydroxy-acid dehydratase (564 aa).

Cys-55 serves as a coordination point for [2Fe-2S] cluster. Mg(2+) is bound at residue Asp-87. Residue Cys-128 coordinates [2Fe-2S] cluster. Residues Asp-129 and Lys-130 each coordinate Mg(2+). Position 130 is an N6-carboxylysine (Lys-130). Residue Cys-200 coordinates [2Fe-2S] cluster. Glu-452 contributes to the Mg(2+) binding site. Residue Ser-478 is the Proton acceptor of the active site.

Belongs to the IlvD/Edd family. Homodimer. It depends on [2Fe-2S] cluster as a cofactor. Mg(2+) is required as a cofactor.

It carries out the reaction (2R)-2,3-dihydroxy-3-methylbutanoate = 3-methyl-2-oxobutanoate + H2O. The enzyme catalyses (2R,3R)-2,3-dihydroxy-3-methylpentanoate = (S)-3-methyl-2-oxopentanoate + H2O. The protein operates within amino-acid biosynthesis; L-isoleucine biosynthesis; L-isoleucine from 2-oxobutanoate: step 3/4. It participates in amino-acid biosynthesis; L-valine biosynthesis; L-valine from pyruvate: step 3/4. Its function is as follows. Functions in the biosynthesis of branched-chain amino acids. Catalyzes the dehydration of (2R,3R)-2,3-dihydroxy-3-methylpentanoate (2,3-dihydroxy-3-methylvalerate) into 2-oxo-3-methylpentanoate (2-oxo-3-methylvalerate) and of (2R)-2,3-dihydroxy-3-methylbutanoate (2,3-dihydroxyisovalerate) into 2-oxo-3-methylbutanoate (2-oxoisovalerate), the penultimate precursor to L-isoleucine and L-valine, respectively. The protein is Dihydroxy-acid dehydratase of Albidiferax ferrireducens (strain ATCC BAA-621 / DSM 15236 / T118) (Rhodoferax ferrireducens).